Here is a 310-residue protein sequence, read N- to C-terminus: Methionyl-tRNA formyltransferase (310 aa).

110-113 contributes to the (6S)-5,6,7,8-tetrahydrofolate binding site; it reads SLLP.

It belongs to the Fmt family.

It catalyses the reaction L-methionyl-tRNA(fMet) + (6R)-10-formyltetrahydrofolate = N-formyl-L-methionyl-tRNA(fMet) + (6S)-5,6,7,8-tetrahydrofolate + H(+). Functionally, attaches a formyl group to the free amino group of methionyl-tRNA(fMet). The formyl group appears to play a dual role in the initiator identity of N-formylmethionyl-tRNA by promoting its recognition by IF2 and preventing the misappropriation of this tRNA by the elongation apparatus. In Clostridium tetani (strain Massachusetts / E88), this protein is Methionyl-tRNA formyltransferase.